Here is a 556-residue protein sequence, read N- to C-terminus: MNSILAIKNIVIESLSQAMEKARQEGQIPALSVDISIEHPQKTNYGDYATSLPLRLAKATGKRPMELAQILASYIETGSGISKVSVAPPGFINFTFSKEWLCSLVKTILTEAGSYGNINMGGGSRVQIEFVSANPTGPIHIGHGRGAVLGSTLSNILKAAGYYVEEEFYINDAGSQIDAFKRTLFARYQQALGKDAAVPQDGYHGQYMVDLAAEMVTKYGDKYLQMPADIAQNDLGEIGMARMLCLISDDLKALKVDFDIWFSERSLYSGGQYKTAMDILSGNNYIAERDNATWFSSTLLGDSKDNVIVRSDGTPTYFASDIAYHYNKFIERKFDRVINIWGADHQGHVSRMKAMVSALGINPERLTTLLFQMITLKRGGELVRLSKRTGEIISLREVIEEVGADACRFFFLARSTESQMDFDLELAKKESAENPVYYVQYAHARICSILHLAEEKQLDYSTGDTALLGEEAELELIRKMAELPEIVETVSRTLEPHHLTYYAQELANAFHQFYKDCRVISDNAELTCARLKLVDASRIVLARTLHLMGMTSPESM.

A 'HIGH' region motif is present at residues 133 to 143 (ANPTGPIHIGH).

The protein belongs to the class-I aminoacyl-tRNA synthetase family. In terms of assembly, monomer.

The protein localises to the cytoplasm. It carries out the reaction tRNA(Arg) + L-arginine + ATP = L-arginyl-tRNA(Arg) + AMP + diphosphate. In Dehalococcoides mccartyi (strain ATCC BAA-2100 / JCM 16839 / KCTC 5957 / BAV1), this protein is Arginine--tRNA ligase.